Consider the following 736-residue polypeptide: Catalase-peroxidase (736 aa).

Positions 1–21 are disordered; the sequence is MSNEQKCPFSGTHGARTTVGT. Positions 96–224 form a cross-link, tryptophyl-tyrosyl-methioninium (Trp-Tyr) (with M-250); the sequence is WHSAGTYRTG…LAAVQMGLIY (129 aa). The active-site Proton acceptor is histidine 97. The tryptophyl-tyrosyl-methioninium (Tyr-Met) (with W-96) cross-link spans 224–250; sequence YVNPEGPDGNPDPVASGRDIRETFARM. Histidine 265 is a binding site for heme b.

Belongs to the peroxidase family. Peroxidase/catalase subfamily. In terms of assembly, homodimer or homotetramer. It depends on heme b as a cofactor. Post-translationally, formation of the three residue Trp-Tyr-Met cross-link is important for the catalase, but not the peroxidase activity of the enzyme.

The catalysed reaction is H2O2 + AH2 = A + 2 H2O. It catalyses the reaction 2 H2O2 = O2 + 2 H2O. In terms of biological role, bifunctional enzyme with both catalase and broad-spectrum peroxidase activity. This Dechloromonas aromatica (strain RCB) protein is Catalase-peroxidase.